An 863-amino-acid polypeptide reads, in one-letter code: Protein ARG5,6, mitochondrial (863 aa).

The N-terminal 65 residues, 1–65, are a transit peptide targeting the mitochondrion; that stretch reads MPSASLLVST…RYVSSTNGFS (65 aa). Positions 353–505 constitute an N-acetyltransferase domain; that stretch reads KLVKRSSIGE…NFVKSCDTAS (153 aa). S359 is subject to Phosphoserine. C675 is a catalytic residue.

This sequence in the N-terminal section; belongs to the acetylglutamate kinase family. It in the C-terminal section; belongs to the NAGSA dehydrogenase family. Post-translationally, the protein precursor is cleaved into the two biologically active enzymes, the kinase and the reductase.

Its subcellular location is the mitochondrion. It catalyses the reaction N-acetyl-L-glutamate 5-semialdehyde + phosphate + NADP(+) = N-acetyl-L-glutamyl 5-phosphate + NADPH + H(+). It carries out the reaction N-acetyl-L-glutamate + ATP = N-acetyl-L-glutamyl 5-phosphate + ADP. It participates in amino-acid biosynthesis; L-arginine biosynthesis; N(2)-acetyl-L-ornithine from L-glutamate: step 2/4. The protein operates within amino-acid biosynthesis; L-arginine biosynthesis; N(2)-acetyl-L-ornithine from L-glutamate: step 3/4. The kinase activity is inhibited by arginine. This is Protein ARG5,6, mitochondrial (ARG5,6) from Saccharomyces cerevisiae (strain ATCC 204508 / S288c) (Baker's yeast).